Here is a 547-residue protein sequence, read N- to C-terminus: (E)-beta-caryophyllene synthase (547 aa).

Positions 302 and 306 each coordinate Mg(2+). Residues Asp302, Asp306, Arg443, and Asn446 each contribute to the substrate site. The short motif at 302 to 306 is the DDXXD motif element; it reads DDLYD. Residues Asn446 and Glu454 each contribute to the Mg(2+) site.

It belongs to the terpene synthase family. As to quaternary structure, monomer. Mg(2+) serves as cofactor. The cofactor is Mn(2+).

It is found in the cytoplasm. The enzyme catalyses (2E,6E)-farnesyl diphosphate = (-)-(E)-beta-caryophyllene + diphosphate. Its pathway is secondary metabolite biosynthesis; terpenoid biosynthesis. Component of the volatile terpenes biosynthesis pathways. Sesquiterpene synthase that converts farnesyl diphosphate to (E)-beta-caryophyllene. Involved in indirect defense by producing volatile signals attracting natural enemies of herbivores. This chain is (E)-beta-caryophyllene synthase, found in Zea mays (Maize).